The primary structure comprises 196 residues: NADH-quinone oxidoreductase subunit C (196 aa).

This sequence belongs to the complex I 30 kDa subunit family. NDH-1 is composed of 14 different subunits. Subunits NuoB, C, D, E, F, and G constitute the peripheral sector of the complex.

It is found in the cell inner membrane. It carries out the reaction a quinone + NADH + 5 H(+)(in) = a quinol + NAD(+) + 4 H(+)(out). In terms of biological role, NDH-1 shuttles electrons from NADH, via FMN and iron-sulfur (Fe-S) centers, to quinones in the respiratory chain. The immediate electron acceptor for the enzyme in this species is believed to be ubiquinone. Couples the redox reaction to proton translocation (for every two electrons transferred, four hydrogen ions are translocated across the cytoplasmic membrane), and thus conserves the redox energy in a proton gradient. This is NADH-quinone oxidoreductase subunit C from Rickettsia bellii (strain RML369-C).